Consider the following 145-residue polypeptide: Procyclic form-specific polypeptide B-alpha (145 aa).

The N-terminal stretch at 1–27 (MAPRSLYLLAVLLFSANLFAGVGFAAA) is a signal peptide. A disordered region spans residues 28 to 127 (AEGPEDKGLT…PEPEPGAATL (100 aa)). Positions 31-52 (PEDKGLTKGGKGKGEKGTKVGA) are enriched in basic and acidic residues. 32 repeat units span residues 59 to 60 (DP), 61 to 62 (DP), 63 to 64 (EP), 65 to 66 (EP), 67 to 68 (EP), 69 to 70 (EP), 71 to 72 (EP), 73 to 74 (EP), 75 to 76 (EP), 77 to 78 (EP), 79 to 80 (EP), 81 to 82 (EP), 83 to 84 (EP), 85 to 86 (EP), 87 to 88 (EP), 89 to 90 (EP), 91 to 92 (EP), 93 to 94 (EP), 95 to 96 (EP), 97 to 98 (EP), 99 to 100 (EP), 101 to 102 (EP), 103 to 104 (EP), 105 to 106 (EP), 107 to 108 (EP), 109 to 110 (EP), 111 to 112 (EP), 113 to 114 (EP), 115 to 116 (EP), 117 to 118 (EP), 119 to 120 (EP), and 121 to 122 (EP). A 32 X 2 AA tandem repeats of [DE]-P region spans residues 59–122 (DPDPEPEPEP…EPEPEPEPEP (64 aa)). Residues 60-120 (PDPEPEPEPE…EPEPEPEPEP (61 aa)) show a composition bias toward acidic residues. G123 carries GPI-anchor amidated glycine lipidation. A propeptide spanning residues 124–145 (AATLKSVALPFAIAAAALVAAF) is cleaved from the precursor.

The protein localises to the cell membrane. Major surface antigen of procyclic forms. The protein is Procyclic form-specific polypeptide B-alpha (PARPB) of Trypanosoma brucei brucei.